A 280-amino-acid polypeptide reads, in one-letter code: Probable endonuclease 4 (280 aa).

Zn(2+)-binding residues include histidine 69, histidine 109, glutamate 145, aspartate 179, histidine 182, histidine 216, aspartate 229, histidine 231, and glutamate 261.

The protein belongs to the AP endonuclease 2 family. The cofactor is Zn(2+).

The catalysed reaction is Endonucleolytic cleavage to 5'-phosphooligonucleotide end-products.. Endonuclease IV plays a role in DNA repair. It cleaves phosphodiester bonds at apurinic or apyrimidinic (AP) sites, generating a 3'-hydroxyl group and a 5'-terminal sugar phosphate. In Actinobacillus pleuropneumoniae serotype 7 (strain AP76), this protein is Probable endonuclease 4.